Consider the following 400-residue polypeptide: S-adenosylmethionine synthase (400 aa).

Residue histidine 17 coordinates ATP. Residue aspartate 19 participates in Mg(2+) binding. Residue glutamate 45 coordinates K(+). L-methionine-binding residues include glutamate 58 and glutamine 101. A flexible loop region spans residues 101 to 111; the sequence is QSADIAMGVDQ. Residues 177–179, 244–245, aspartate 253, 259–260, alanine 276, and lysine 280 each bind ATP; these read DGK, RF, and RK. Aspartate 253 is an L-methionine binding site. Residue lysine 284 participates in L-methionine binding.

This sequence belongs to the AdoMet synthase family. In terms of assembly, homotetramer; dimer of dimers. The cofactor is Mg(2+). K(+) serves as cofactor.

It localises to the cytoplasm. It carries out the reaction L-methionine + ATP + H2O = S-adenosyl-L-methionine + phosphate + diphosphate. It functions in the pathway amino-acid biosynthesis; S-adenosyl-L-methionine biosynthesis; S-adenosyl-L-methionine from L-methionine: step 1/1. Catalyzes the formation of S-adenosylmethionine (AdoMet) from methionine and ATP. The overall synthetic reaction is composed of two sequential steps, AdoMet formation and the subsequent tripolyphosphate hydrolysis which occurs prior to release of AdoMet from the enzyme. This chain is S-adenosylmethionine synthase, found in Bacillus subtilis (strain 168).